Here is a 349-residue protein sequence, read N- to C-terminus: Holliday junction branch migration complex subunit RuvB (349 aa).

Positions 1 to 183 are large ATPase domain (RuvB-L); sequence MTDPSRLVTP…FGIPIRLNFY (183 aa). Residues leucine 22, arginine 23, glycine 64, lysine 67, threonine 68, threonine 69, 130-132, arginine 173, tyrosine 183, and arginine 220 contribute to the ATP site; that span reads EDF. Threonine 68 provides a ligand contact to Mg(2+). Positions 184 to 254 are small ATPAse domain (RuvB-S); it reads TIEELESIVT…IADHALGALE (71 aa). The head domain (RuvB-H) stretch occupies residues 257-349; that stretch reads SAGLDAMDRR…GLFGDTGDQE (93 aa). DNA is bound by residues arginine 293, arginine 312, and arginine 317.

Belongs to the RuvB family. Homohexamer. Forms an RuvA(8)-RuvB(12)-Holliday junction (HJ) complex. HJ DNA is sandwiched between 2 RuvA tetramers; dsDNA enters through RuvA and exits via RuvB. An RuvB hexamer assembles on each DNA strand where it exits the tetramer. Each RuvB hexamer is contacted by two RuvA subunits (via domain III) on 2 adjacent RuvB subunits; this complex drives branch migration. In the full resolvosome a probable DNA-RuvA(4)-RuvB(12)-RuvC(2) complex forms which resolves the HJ.

It is found in the cytoplasm. It catalyses the reaction ATP + H2O = ADP + phosphate + H(+). Its function is as follows. The RuvA-RuvB-RuvC complex processes Holliday junction (HJ) DNA during genetic recombination and DNA repair, while the RuvA-RuvB complex plays an important role in the rescue of blocked DNA replication forks via replication fork reversal (RFR). RuvA specifically binds to HJ cruciform DNA, conferring on it an open structure. The RuvB hexamer acts as an ATP-dependent pump, pulling dsDNA into and through the RuvAB complex. RuvB forms 2 homohexamers on either side of HJ DNA bound by 1 or 2 RuvA tetramers; 4 subunits per hexamer contact DNA at a time. Coordinated motions by a converter formed by DNA-disengaged RuvB subunits stimulates ATP hydrolysis and nucleotide exchange. Immobilization of the converter enables RuvB to convert the ATP-contained energy into a lever motion, pulling 2 nucleotides of DNA out of the RuvA tetramer per ATP hydrolyzed, thus driving DNA branch migration. The RuvB motors rotate together with the DNA substrate, which together with the progressing nucleotide cycle form the mechanistic basis for DNA recombination by continuous HJ branch migration. Branch migration allows RuvC to scan DNA until it finds its consensus sequence, where it cleaves and resolves cruciform DNA. This chain is Holliday junction branch migration complex subunit RuvB, found in Rhodopseudomonas palustris (strain ATCC BAA-98 / CGA009).